The chain runs to 331 residues: PTS-dependent dihydroxyacetone kinase 2, dihydroxyacetone-binding subunit DhaK (331 aa).

A DhaK domain is found at 7–328; sequence DGYEAVEEML…LDTPCDTPYF (322 aa). Dihydroxyacetone-binding positions include 55 to 58 and aspartate 111; that span reads GSGH. Histidine 58 (proton acceptor) is an active-site residue. Residue histidine 218 is the Tele-hemiaminal-histidine intermediate of the active site.

As to quaternary structure, homodimer. The dihydroxyacetone kinase complex is composed of a homodimer of DhaM, a homodimer of DhaK and the subunit DhaL.

It is found in the cytoplasm. The enzyme catalyses dihydroxyacetone + phosphoenolpyruvate = dihydroxyacetone phosphate + pyruvate. It functions in the pathway polyol metabolism; glycerol degradation. In terms of biological role, dihydroxyacetone binding subunit of the dihydroxyacetone kinase, which is responsible for the phosphoenolpyruvate (PEP)-dependent phosphorylation of dihydroxyacetone via a phosphoryl group transfer from DhaL-ATP. In Listeria innocua serovar 6a (strain ATCC BAA-680 / CLIP 11262), this protein is PTS-dependent dihydroxyacetone kinase 2, dihydroxyacetone-binding subunit DhaK.